Consider the following 284-residue polypeptide: Ribosomal RNA small subunit methyltransferase A (284 aa).

Asparagine 26, leucine 28, glycine 53, glutamate 74, aspartate 97, and asparagine 127 together coordinate S-adenosyl-L-methionine.

This sequence belongs to the class I-like SAM-binding methyltransferase superfamily. rRNA adenine N(6)-methyltransferase family. RsmA subfamily.

The protein resides in the cytoplasm. It carries out the reaction adenosine(1518)/adenosine(1519) in 16S rRNA + 4 S-adenosyl-L-methionine = N(6)-dimethyladenosine(1518)/N(6)-dimethyladenosine(1519) in 16S rRNA + 4 S-adenosyl-L-homocysteine + 4 H(+). Its function is as follows. Specifically dimethylates two adjacent adenosines (A1518 and A1519) in the loop of a conserved hairpin near the 3'-end of 16S rRNA in the 30S particle. May play a critical role in biogenesis of 30S subunits. This chain is Ribosomal RNA small subunit methyltransferase A, found in Anaeromyxobacter dehalogenans (strain 2CP-1 / ATCC BAA-258).